Reading from the N-terminus, the 416-residue chain is cAMP-dependent protein kinase type II-beta regulatory subunit (416 aa).

Residues 2–151 form a dimerization and phosphorylation region; it reads SIEIPAGLTE…RLQEACKDIL (150 aa). Residues 53–97 are disordered; that stretch reads HEGRTWGDAGAAAGGGTPSKGVNFAEEPMRSDSENGEEEEAAEAG. Residue T69 is modified to Phosphothreonine. Phosphoserine occurs at positions 83, 85, and 112. 3',5'-cyclic AMP is bound by residues 152-273, E221, R230, 274-416, E350, and R359; these read LFKN…ESLP and FLKS…EPTA.

It belongs to the cAMP-dependent kinase regulatory chain family. As to quaternary structure, the inactive form of the enzyme is composed of two regulatory chains and two catalytic chains. Activation by cAMP produces two active catalytic monomers and a regulatory dimer that binds four cAMP molecules. Interacts with PRKACA and PRKACB. Interacts with the phosphorylated form of PJA2. Forms a complex composed of PRKAR2B, GSK3B and GSKIP through GSKIP interaction; facilitates PKA-induced phosphorylation and regulates GSK3B activity. Phosphorylated by the activated catalytic chain. As to expression, four types of regulatory chains are found: I-alpha, I-beta, II-alpha, and II-beta. Their expression varies among tissues and is in some cases constitutive and in others inducible. Brain. Present in a few pyramidal neurons and mostly in mossy fibers. Colocalizes with PJA2 in dentate granule cells and at postsynaptic sites of primary hippocampal neurons.

The protein localises to the cytoplasm. Its subcellular location is the cell membrane. In terms of biological role, regulatory subunit of the cAMP-dependent protein kinases involved in cAMP signaling in cells. Type II regulatory chains mediate membrane association by binding to anchoring proteins, including the MAP2 kinase. The chain is cAMP-dependent protein kinase type II-beta regulatory subunit (Prkar2b) from Rattus norvegicus (Rat).